Consider the following 415-residue polypeptide: MIFDKEDFESFDPELWAAIHAEEIRQQQNIELIASENIVSKAVMAAQGSVLTNKYAEGYPGKRYYGGTEAVDVVENLAIDRAKELFGAKFVNVQPHSGSQANAAAYMALIQPGDTVLGMDLNAGGHLTHGASVNFSGKTYHFVPYGVNPQTELLDYEEILKIAKEVQPKLIVAGASAYSRLIDFAKFRQITDSVGAKLMVDMAHIAGLVATDAHPNPLPYADVVTTTTHKTLRGPRGGMILTNDEVLAKKINSAIFPGTQGGPLEHVIAAKAVAFKEALDPEFATYIEQVIKNTQAMADEFAKVEGLRLIAGGSDNHLLNLKVLDLGINGKEAQDLLDSVHITLNKEAIPDETLSPFKTSGVRIGAAAITSRGFKEAEARKVAQLVSNALVNHDNQEKLEEVRKAALELTHQFPL.

(6S)-5,6,7,8-tetrahydrofolate contacts are provided by residues L121 and 125-127; that span reads GHL. At K230 the chain carries N6-(pyridoxal phosphate)lysine. Residue 355-357 coordinates (6S)-5,6,7,8-tetrahydrofolate; it reads SPF.

It belongs to the SHMT family. As to quaternary structure, homodimer. Pyridoxal 5'-phosphate is required as a cofactor.

The protein localises to the cytoplasm. It catalyses the reaction (6R)-5,10-methylene-5,6,7,8-tetrahydrofolate + glycine + H2O = (6S)-5,6,7,8-tetrahydrofolate + L-serine. It participates in one-carbon metabolism; tetrahydrofolate interconversion. The protein operates within amino-acid biosynthesis; glycine biosynthesis; glycine from L-serine: step 1/1. Catalyzes the reversible interconversion of serine and glycine with tetrahydrofolate (THF) serving as the one-carbon carrier. This reaction serves as the major source of one-carbon groups required for the biosynthesis of purines, thymidylate, methionine, and other important biomolecules. Also exhibits THF-independent aldolase activity toward beta-hydroxyamino acids, producing glycine and aldehydes, via a retro-aldol mechanism. The polypeptide is Serine hydroxymethyltransferase (Lactococcus lactis subsp. cremoris (strain SK11)).